The following is a 122-amino-acid chain: Large ribosomal subunit protein uL14c (122 aa).

The protein belongs to the universal ribosomal protein uL14 family. Part of the 50S ribosomal subunit.

It localises to the plastid. It is found in the chloroplast. Its function is as follows. Binds to 23S rRNA. This is Large ribosomal subunit protein uL14c from Staurastrum punctulatum (Green alga).